The sequence spans 134 residues: DNA-binding protein H-NS, plasmid (134 aa).

A coiled-coil region spans residues 23-67 (LEILEELLEKLSVVVEERRQEESSKEAELKARLEKIESLRQLMLE). The tract at residues 77–96 (SSFSAKSGAPKKVREPRPAK) is disordered. A DNA-binding region spans residues 112-117 (QGRTPK).

This sequence belongs to the histone-like protein H-NS family. Homodimer that oligomerizes on DNA into higher-order complexes that form bridges between disparate regions of DNA compacting it. Interacts with Hha, YdgT and StpA.

It is found in the cytoplasm. The protein resides in the nucleoid. In terms of biological role, a DNA-binding protein implicated in transcriptional repression and chromosome organization and compaction. Binds DNA, modifying gene expression, especially non-core genes. Does not regulate the same set of genes as its chromosomal counterpart (tested in S.typhimurium strain SL1344 / SV5015, chromosomal H-NS protein is AC A0A0H3NBY9). Thus it has a not-completely overlapping set of gene targets compared to its chromosomal homolog; many of these target genes are either plasmid-encoded or acquired by horizontally transferred genes (HTG). This protein can function in the absence of H-NS-modulating protein Hha (either chromosomal or plasmid-encoded), although many HTG genes are regulated by an H-NS/Hha complex. Binds nucleation sites in AT-rich DNA and bridges them, forming higher-order nucleoprotein complexes and condensing the chromosome. A subset of genes are repressed by H-NS in association with Hha and/or Cnu (ydgT). The polypeptide is DNA-binding protein H-NS, plasmid (hns) (Salmonella typhi).